The sequence spans 176 residues: Oleosin Ara h 14.0102 (176 aa).

N-acetylalanine; alternate is present on Ala-2. Transmembrane regions (helical) follow at residues 61-81 and 87-107; these read GTLLLLSGLSLLGTIIGLAIA and FFSPVIVPAVVTIGLAVIGIL. Residues 156–176 form a disordered region; that stretch reads KTKDAGQEIQTKAQDVKRSSS.

The protein belongs to the oleosin family. In terms of assembly, homodimer. Forms oligomers. Expressed in seeds (at protein level). Not expressed in leaves.

It is found in the lipid droplet. It localises to the membrane. In terms of biological role, may have a structural role to stabilize the lipid body during desiccation of the seed by preventing coalescence of the oil. Probably interacts with both lipid and phospholipid moieties of lipid bodies. May also provide recognition signals for specific lipase anchorage in lipolysis during seedling growth. The protein is Oleosin Ara h 14.0102 of Arachis hypogaea (Peanut).